Consider the following 32-residue polypeptide: Dermaseptin-DA4 (32 aa).

As to expression, expressed by the skin glands.

It localises to the secreted. It is found in the target cell membrane. Functionally, antimicrobial peptide with activity against Gram-negative bacteria, but not against Gram-positive bacteria. Active against E.coli (MIC=5 uM), and P.aeruginosa (MIC=40 uM). Acts by disrupting cell membranes. Is able to depolarize membranes of Gram-positive and Gram-negative bacteria. Also acts as a potent chemoattractant for human leukocytes and activates them mainly through a GPCR, possibly FPRL1 coupled to the ERK1/2 MAPK pathway. Is unstructured in water but become helical upon binding to anionic lipids. In contrast to most dermaseptins, is not structured in the presence of zwitterionic lipids. Does not show hemolytic activity. The sequence is that of Dermaseptin-DA4 from Agalychnis dacnicolor (Giant Mexican leaf frog).